A 259-amino-acid chain; its full sequence is Type III pantothenate kinase (259 aa).

9–16 (DAGNSRIK) contributes to the ATP binding site. Substrate contacts are provided by residues Tyr-93 and 100-103 (GSDR). The active-site Proton acceptor is Asp-102. An ATP-binding site is contributed by Thr-126. Thr-190 is a binding site for substrate.

Belongs to the type III pantothenate kinase family. As to quaternary structure, homodimer. It depends on NH4(+) as a cofactor. K(+) is required as a cofactor.

It is found in the cytoplasm. It carries out the reaction (R)-pantothenate + ATP = (R)-4'-phosphopantothenate + ADP + H(+). It participates in cofactor biosynthesis; coenzyme A biosynthesis; CoA from (R)-pantothenate: step 1/5. In terms of biological role, catalyzes the phosphorylation of pantothenate (Pan), the first step in CoA biosynthesis. This Burkholderia pseudomallei (strain K96243) protein is Type III pantothenate kinase.